The following is a 571-amino-acid chain: Asparagine--tRNA ligase, cytoplasmic 3 (571 aa).

Glycine 2 bears the N-acetylglycine mark. The OB DNA-binding region spans 50-128 (VRIGGWVKTG…QSIELSVETV (79 aa)). In terms of domain architecture, WHEP-TRS spans 233–289 (DVEAARLIVKERGEAVAQLKVAKASKEEITASVAQLSVAKASLAHVEERLRLKPGLP).

Belongs to the class-II aminoacyl-tRNA synthetase family.

It localises to the cytoplasm. It is found in the cytosol. It carries out the reaction tRNA(Asn) + L-asparagine + ATP = L-asparaginyl-tRNA(Asn) + AMP + diphosphate + H(+). The protein is Asparagine--tRNA ligase, cytoplasmic 3 of Arabidopsis thaliana (Mouse-ear cress).